Here is a 51-residue protein sequence, read N- to C-terminus: ATP synthase protein 8 (51 aa).

Residues Leu7–Leu27 form a helical membrane-spanning segment.

It belongs to the ATPase protein 8 family. In terms of assembly, F-type ATPases have 2 components, CF(1) - the catalytic core - and CF(0) - the membrane proton channel.

It localises to the mitochondrion membrane. In terms of biological role, mitochondrial membrane ATP synthase (F(1)F(0) ATP synthase or Complex V) produces ATP from ADP in the presence of a proton gradient across the membrane which is generated by electron transport complexes of the respiratory chain. F-type ATPases consist of two structural domains, F(1) - containing the extramembraneous catalytic core and F(0) - containing the membrane proton channel, linked together by a central stalk and a peripheral stalk. During catalysis, ATP synthesis in the catalytic domain of F(1) is coupled via a rotary mechanism of the central stalk subunits to proton translocation. Part of the complex F(0) domain. Minor subunit located with subunit a in the membrane. The protein is ATP synthase protein 8 (MT-ATP8) of Limulus polyphemus (Atlantic horseshoe crab).